We begin with the raw amino-acid sequence, 209 residues long: Guanylate kinase (209 aa).

A Guanylate kinase-like domain is found at 10–189 (GLLLVLSAPS…AFSDLRSVVV (180 aa)). 17 to 24 (APSGAGKT) is an ATP binding site.

Belongs to the guanylate kinase family.

It localises to the cytoplasm. The catalysed reaction is GMP + ATP = GDP + ADP. Its function is as follows. Essential for recycling GMP and indirectly, cGMP. The chain is Guanylate kinase from Myxococcus xanthus (strain DK1622).